A 239-amino-acid polypeptide reads, in one-letter code: uncharacterized protein (239 aa).

A dksA C4-type; degenerate zinc finger spans residues 94–114 (CEVSGKEIPFERLEALPTATT). A compositionally biased stretch (acidic residues) spans 133–158 (ETPFGQFEFDDDEEIRAPYDSEDSYQ). Residues 133–182 (ETPFGQFEFDDDEEIRAPYDSEDSYQDVEKYGNSQTPQDMENPPLSYDDM) are disordered.

This is an uncharacterized protein from Bacillus subtilis (strain 168).